The chain runs to 157 residues: Endoribonuclease YbeY (157 aa).

Zn(2+)-binding residues include H114, H118, and H124.

This sequence belongs to the endoribonuclease YbeY family. It depends on Zn(2+) as a cofactor.

Its subcellular location is the cytoplasm. Its function is as follows. Single strand-specific metallo-endoribonuclease involved in late-stage 70S ribosome quality control and in maturation of the 3' terminus of the 16S rRNA. In Salmonella dublin (strain CT_02021853), this protein is Endoribonuclease YbeY.